The sequence spans 126 residues: Aspartate 1-decarboxylase 1 (126 aa).

Residue serine 25 is the Schiff-base intermediate with substrate; via pyruvic acid of the active site. Serine 25 carries the pyruvic acid (Ser) modification. Threonine 57 lines the substrate pocket. Tyrosine 58 functions as the Proton donor in the catalytic mechanism. 73–75 (GSA) is a substrate binding site.

The protein belongs to the PanD family. As to quaternary structure, heterooctamer of four alpha and four beta subunits. It depends on pyruvate as a cofactor. Post-translationally, is synthesized initially as an inactive proenzyme, which is activated by self-cleavage at a specific serine bond to produce a beta-subunit with a hydroxyl group at its C-terminus and an alpha-subunit with a pyruvoyl group at its N-terminus.

It is found in the cytoplasm. It carries out the reaction L-aspartate + H(+) = beta-alanine + CO2. Its pathway is cofactor biosynthesis; (R)-pantothenate biosynthesis; beta-alanine from L-aspartate: step 1/1. Functionally, catalyzes the pyruvoyl-dependent decarboxylation of aspartate to produce beta-alanine. In Polaromonas sp. (strain JS666 / ATCC BAA-500), this protein is Aspartate 1-decarboxylase 1.